A 269-amino-acid polypeptide reads, in one-letter code: Zinc transporter ZupT (269 aa).

Transmembrane regions (helical) follow at residues 12–32, 41–61, 75–95, 126–146, 152–172, 187–207, 211–231, and 249–269; these read AFSI…LVMF, LSFG…TEIF, DHAF…IALI, MMAA…TFFA, AVGM…GISI, VWAC…GYLV, FLSP…MVFL, and TVYG…LFHF. Fe(2+)-binding residues include N136 and E139. Zn(2+)-binding residues include E139 and H164. Fe(2+) contacts are provided by N165, E168, and E197. A Zn(2+)-binding site is contributed by E168.

The protein belongs to the ZIP transporter (TC 2.A.5) family. ZupT subfamily.

It localises to the cell inner membrane. The enzyme catalyses Zn(2+)(in) = Zn(2+)(out). Its function is as follows. Mediates zinc uptake. May also transport other divalent cations. This chain is Zinc transporter ZupT, found in Neisseria meningitidis serogroup A / serotype 4A (strain DSM 15465 / Z2491).